The following is a 541-amino-acid chain: MTDTLTFNTKHLLEALFESGIRHFIVSPGSRSTPIALLLAEYAEQNNEIKLFVDVDERSAGFFALGIAKTLLEPVVLLGTSGTAIAEYMPAVAEAYAANIPLVVLSTDRPQELQFNGAPQTIPQSNLFGQLTKQAVLIRLQDMHSDVTEYIDFIVQKVVNLSITAPRGPIQINLPLRKPLMPVLDRQDEVHVQRVVFDKQSVQYRLPPITAKRLLILAGPNVLNSYDDSLKKFAIKNNVPVIADVLSQSRHTYTIHGIDVLLQAHKINADLKPDLVVRFGKTPVSARVLQWLKEENILTWHVDEDAGVDHTRHIVRAIKMAPHDFLESMHLTLSKNQIDFNQKWLSLPKVIKTRNEMNIITALDDAVPDDTHIFVANSMPIRDMDNFFTGNHTQRIYANRGANGIDGVISSALGMSAVVKQRSVLLTGDLTLFHDMNGLMMAKNYQLPLDIIVINNNGGGIFSFLPQAGAPKYFEQLFGTPLNIDIKKIADLYYIDYHQLNVPEALSQILQTPSKTTRLIEYKSDHQRNRDDHREVLEMLK.

The protein belongs to the TPP enzyme family. MenD subfamily. Homodimer. Mg(2+) is required as a cofactor. It depends on Mn(2+) as a cofactor. The cofactor is thiamine diphosphate.

The enzyme catalyses isochorismate + 2-oxoglutarate + H(+) = 5-enolpyruvoyl-6-hydroxy-2-succinyl-cyclohex-3-ene-1-carboxylate + CO2. It functions in the pathway quinol/quinone metabolism; 1,4-dihydroxy-2-naphthoate biosynthesis; 1,4-dihydroxy-2-naphthoate from chorismate: step 2/7. The protein operates within quinol/quinone metabolism; menaquinone biosynthesis. Functionally, catalyzes the thiamine diphosphate-dependent decarboxylation of 2-oxoglutarate and the subsequent addition of the resulting succinic semialdehyde-thiamine pyrophosphate anion to isochorismate to yield 2-succinyl-5-enolpyruvyl-6-hydroxy-3-cyclohexene-1-carboxylate (SEPHCHC). The protein is 2-succinyl-5-enolpyruvyl-6-hydroxy-3-cyclohexene-1-carboxylate synthase of Leuconostoc mesenteroides subsp. mesenteroides (strain ATCC 8293 / DSM 20343 / BCRC 11652 / CCM 1803 / JCM 6124 / NCDO 523 / NBRC 100496 / NCIMB 8023 / NCTC 12954 / NRRL B-1118 / 37Y).